Reading from the N-terminus, the 227-residue chain is UPF0758 protein Rxyl_1530 (227 aa).

In terms of domain architecture, MPN spans 106-227; it reads VISSPADVDG…YFSMKEHGML (122 aa). Zn(2+)-binding residues include histidine 177, histidine 179, and aspartate 190. Positions 177–190 match the JAMM motif motif; the sequence is HNHPSGRVEPSRED.

This sequence belongs to the UPF0758 family.

This chain is UPF0758 protein Rxyl_1530, found in Rubrobacter xylanophilus (strain DSM 9941 / JCM 11954 / NBRC 16129 / PRD-1).